Consider the following 514-residue polypeptide: Bifunctional purine biosynthesis protein PurH (514 aa).

One can recognise an MGS-like domain in the interval 1 to 145; the sequence is MIKRALISVS…KNYQDVVVIV (145 aa).

It belongs to the PurH family.

The enzyme catalyses (6R)-10-formyltetrahydrofolate + 5-amino-1-(5-phospho-beta-D-ribosyl)imidazole-4-carboxamide = 5-formamido-1-(5-phospho-D-ribosyl)imidazole-4-carboxamide + (6S)-5,6,7,8-tetrahydrofolate. The catalysed reaction is IMP + H2O = 5-formamido-1-(5-phospho-D-ribosyl)imidazole-4-carboxamide. It functions in the pathway purine metabolism; IMP biosynthesis via de novo pathway; 5-formamido-1-(5-phospho-D-ribosyl)imidazole-4-carboxamide from 5-amino-1-(5-phospho-D-ribosyl)imidazole-4-carboxamide (10-formyl THF route): step 1/1. The protein operates within purine metabolism; IMP biosynthesis via de novo pathway; IMP from 5-formamido-1-(5-phospho-D-ribosyl)imidazole-4-carboxamide: step 1/1. This is Bifunctional purine biosynthesis protein PurH from Acetivibrio thermocellus (strain ATCC 27405 / DSM 1237 / JCM 9322 / NBRC 103400 / NCIMB 10682 / NRRL B-4536 / VPI 7372) (Clostridium thermocellum).